Here is a 390-residue protein sequence, read N- to C-terminus: GTPase Obg (390 aa).

In terms of domain architecture, Obg spans 1–159 (MKFVDEATIL…RELTLELLLL (159 aa)). Residues 128 to 147 (SRFKSSVNRAPRQKTNGTKG) are disordered. Residues 129 to 145 (RFKSSVNRAPRQKTNGT) show a composition bias toward polar residues. Residues 160–333 (ADVGMLGLPN…LCWDVMNFLK (174 aa)) enclose the OBG-type G domain. GTP-binding positions include 166 to 173 (GLPNAGKS), 191 to 195 (FTTLV), 213 to 216 (DIPG), 283 to 286 (NKVD), and 314 to 316 (SAA). Mg(2+)-binding residues include Ser173 and Thr193.

Belongs to the TRAFAC class OBG-HflX-like GTPase superfamily. OBG GTPase family. As to quaternary structure, monomer. The cofactor is Mg(2+).

The protein resides in the cytoplasm. Its function is as follows. An essential GTPase which binds GTP, GDP and possibly (p)ppGpp with moderate affinity, with high nucleotide exchange rates and a fairly low GTP hydrolysis rate. Plays a role in control of the cell cycle, stress response, ribosome biogenesis and in those bacteria that undergo differentiation, in morphogenesis control. In Pectobacterium atrosepticum (strain SCRI 1043 / ATCC BAA-672) (Erwinia carotovora subsp. atroseptica), this protein is GTPase Obg.